Reading from the N-terminus, the 644-residue chain is 3D-(3,5/4)-trihydroxycyclohexane-1,2-dione hydrolase (644 aa).

Glu-65 is a binding site for thiamine diphosphate. The segment at 442-522 (SLPGDLHKVW…INILLFDNAG (81 aa)) is thiamine pyrophosphate binding. Mg(2+)-binding residues include Asp-493 and Asn-520.

The protein belongs to the TPP enzyme family. It depends on Mg(2+) as a cofactor. Thiamine diphosphate is required as a cofactor.

The enzyme catalyses 3D-3,5/4-trihydroxycyclohexane-1,2-dione + H2O = 5-deoxy-D-glucuronate + H(+). The protein operates within polyol metabolism; myo-inositol degradation into acetyl-CoA; acetyl-CoA from myo-inositol: step 3/7. Functionally, involved in the cleavage of the C1-C2 bond of 3D-(3,5/4)-trihydroxycyclohexane-1,2-dione (THcHDO) to yield 5-deoxy-glucuronate (5DG). The sequence is that of 3D-(3,5/4)-trihydroxycyclohexane-1,2-dione hydrolase from Clostridium tetani (strain Massachusetts / E88).